The primary structure comprises 791 residues: Phenylalanine--tRNA ligase beta subunit (791 aa).

Residues 39 to 148 (AADFSGVVVA…ADAPVGADIR (110 aa)) form the tRNA-binding domain. Residues 401 to 476 (PLRAPVRLRE…RVYGYDAIPR (76 aa)) form the B5 domain. Residues Asp-454, Asp-460, Glu-463, and Glu-464 each contribute to the Mg(2+) site. The FDX-ACB domain maps to 697–790 (SRFPLVRRDL…LAADFGAKLR (94 aa)).

It belongs to the phenylalanyl-tRNA synthetase beta subunit family. Type 1 subfamily. Tetramer of two alpha and two beta subunits. Requires Mg(2+) as cofactor.

Its subcellular location is the cytoplasm. It carries out the reaction tRNA(Phe) + L-phenylalanine + ATP = L-phenylalanyl-tRNA(Phe) + AMP + diphosphate + H(+). In Methylococcus capsulatus (strain ATCC 33009 / NCIMB 11132 / Bath), this protein is Phenylalanine--tRNA ligase beta subunit.